The following is a 267-amino-acid chain: Small ribosomal subunit protein uS2 (267 aa).

The segment at 226–267 is disordered; that stretch reads AAAPNSASVREEEFSAESADEGKGRRAPAKKGEKKADAPAAE. Residues 245–267 are compositionally biased toward basic and acidic residues; the sequence is DEGKGRRAPAKKGEKKADAPAAE.

Belongs to the universal ribosomal protein uS2 family.

This Xanthomonas oryzae pv. oryzae (strain MAFF 311018) protein is Small ribosomal subunit protein uS2.